We begin with the raw amino-acid sequence, 220 residues long: UPF0643 protein PB2B2.08 (220 aa).

The protein belongs to the UPF0643 family.

The protein resides in the cytoplasm. Its subcellular location is the nucleus. This chain is UPF0643 protein PB2B2.08, found in Schizosaccharomyces pombe (strain 972 / ATCC 24843) (Fission yeast).